Consider the following 239-residue polypeptide: Ribonuclease HII (239 aa).

The RNase H type-2 domain occupies 18-231 (KIIVGLDEAG…SKNLLKEIEE (214 aa)). Aspartate 24, glutamate 25, and aspartate 125 together coordinate a divalent metal cation.

It belongs to the RNase HII family. Requires Mn(2+) as cofactor. Mg(2+) serves as cofactor.

The protein localises to the cytoplasm. The enzyme catalyses Endonucleolytic cleavage to 5'-phosphomonoester.. Its function is as follows. Endonuclease that specifically degrades the RNA of RNA-DNA hybrids. In Methanococcus maripaludis (strain C7 / ATCC BAA-1331), this protein is Ribonuclease HII.